The chain runs to 792 residues: Phenylalanine--tRNA ligase beta subunit (792 aa).

The 109-residue stretch at 39-147 (GESLGQVVVA…DDAPVGQALA (109 aa)) folds into the tRNA-binding domain. The B5 domain maps to 400–475 (PQPARIRLRR…RIHGYDRVPT (76 aa)). Residues Asp453, Asp459, Glu462, and Glu463 each contribute to the Mg(2+) site. The FDX-ACB domain occupies 698–791 (SRFPSVRRDL…IEREHRARIR (94 aa)).

This sequence belongs to the phenylalanyl-tRNA synthetase beta subunit family. Type 1 subfamily. As to quaternary structure, tetramer of two alpha and two beta subunits. Mg(2+) serves as cofactor.

It is found in the cytoplasm. It carries out the reaction tRNA(Phe) + L-phenylalanine + ATP = L-phenylalanyl-tRNA(Phe) + AMP + diphosphate + H(+). In Xanthomonas euvesicatoria pv. vesicatoria (strain 85-10) (Xanthomonas campestris pv. vesicatoria), this protein is Phenylalanine--tRNA ligase beta subunit.